Here is a 188-residue protein sequence, read N- to C-terminus: ATP synthase subunit b (188 aa).

A helical membrane pass occupies residues 19 to 39 (VYVLGATIVSFLILFLFITYF).

Belongs to the ATPase B chain family. As to quaternary structure, F-type ATPases have 2 components, F(1) - the catalytic core - and F(0) - the membrane proton channel. F(1) has five subunits: alpha(3), beta(3), gamma(1), delta(1), epsilon(1). F(0) has three main subunits: a(1), b(2) and c(10-14). The alpha and beta chains form an alternating ring which encloses part of the gamma chain. F(1) is attached to F(0) by a central stalk formed by the gamma and epsilon chains, while a peripheral stalk is formed by the delta and b chains.

It is found in the cell membrane. F(1)F(0) ATP synthase produces ATP from ADP in the presence of a proton or sodium gradient. F-type ATPases consist of two structural domains, F(1) containing the extramembraneous catalytic core and F(0) containing the membrane proton channel, linked together by a central stalk and a peripheral stalk. During catalysis, ATP synthesis in the catalytic domain of F(1) is coupled via a rotary mechanism of the central stalk subunits to proton translocation. Functionally, component of the F(0) channel, it forms part of the peripheral stalk, linking F(1) to F(0). In Mesomycoplasma hyopneumoniae (strain J / ATCC 25934 / NCTC 10110) (Mycoplasma hyopneumoniae), this protein is ATP synthase subunit b.